The following is a 413-amino-acid chain: S-adenosylmethionine synthase (413 aa).

Position 15 (H15) interacts with ATP. D17 is a Mg(2+) binding site. E43 lines the K(+) pocket. Residues E56 and Q100 each coordinate L-methionine. The flexible loop stretch occupies residues Q100–D110. ATP-binding positions include D171–K173, K248–F249, D257, R263–K264, A280, and K284. D257 contributes to the L-methionine binding site. K288 contributes to the L-methionine binding site.

Belongs to the AdoMet synthase family. In terms of assembly, homotetramer; dimer of dimers. Mg(2+) is required as a cofactor. Requires K(+) as cofactor.

The protein localises to the cytoplasm. The catalysed reaction is L-methionine + ATP + H2O = S-adenosyl-L-methionine + phosphate + diphosphate. The protein operates within amino-acid biosynthesis; S-adenosyl-L-methionine biosynthesis; S-adenosyl-L-methionine from L-methionine: step 1/1. In terms of biological role, catalyzes the formation of S-adenosylmethionine (AdoMet) from methionine and ATP. The overall synthetic reaction is composed of two sequential steps, AdoMet formation and the subsequent tripolyphosphate hydrolysis which occurs prior to release of AdoMet from the enzyme. This Prochlorococcus marinus (strain MIT 9301) protein is S-adenosylmethionine synthase.